The following is a 216-amino-acid chain: MSVPQQPLILQRGLEAYETTFAAMRAFTDARTAATADELWIVEHPPVFTLGLAADPSHVLDPHQIPVVETDRGGEVTYHGPGQVVIYLLLDLRRHKADARLFARELVNKIEQSVIDTLAAYNLACERKPGAPGIYMSDGPAQGAKIAALGLKIRGNGCTYHGVSLNVAMDLTPFTWINPCGYEDLATIDMQSLGAQTTLAEVQNALANRLSTSLSR.

One can recognise a BPL/LPL catalytic domain in the interval 33–216 (AATADELWIV…ANRLSTSLSR (184 aa)). Residues 72–79 (RGGEVTYH), 148–150 (ALG), and 162–164 (GVS) contribute to the substrate site. The active-site Acyl-thioester intermediate is the cysteine 180.

It belongs to the LipB family.

It is found in the cytoplasm. It catalyses the reaction octanoyl-[ACP] + L-lysyl-[protein] = N(6)-octanoyl-L-lysyl-[protein] + holo-[ACP] + H(+). It functions in the pathway protein modification; protein lipoylation via endogenous pathway; protein N(6)-(lipoyl)lysine from octanoyl-[acyl-carrier-protein]: step 1/2. Its function is as follows. Catalyzes the transfer of endogenously produced octanoic acid from octanoyl-acyl-carrier-protein onto the lipoyl domains of lipoate-dependent enzymes. Lipoyl-ACP can also act as a substrate although octanoyl-ACP is likely to be the physiological substrate. The sequence is that of Octanoyltransferase from Janthinobacterium sp. (strain Marseille) (Minibacterium massiliensis).